A 325-amino-acid polypeptide reads, in one-letter code: GMP reductase (325 aa).

The active-site Thioimidate intermediate is cysteine 174. 203–226 (IIADGGIRTHGDIAKSIRFGATMV) serves as a coordination point for NADP(+).

It belongs to the IMPDH/GMPR family. GuaC type 2 subfamily.

The catalysed reaction is IMP + NH4(+) + NADP(+) = GMP + NADPH + 2 H(+). In terms of biological role, catalyzes the irreversible NADPH-dependent deamination of GMP to IMP. It functions in the conversion of nucleobase, nucleoside and nucleotide derivatives of G to A nucleotides, and in maintaining the intracellular balance of A and G nucleotides. The protein is GMP reductase of Helicobacter pylori (strain G27).